The following is a 221-amino-acid chain: Lipoprotein-releasing system ATP-binding protein LolD (221 aa).

Positions 6 to 220 (LILKNISKHY…YKLKHGLLNI (215 aa)) constitute an ABC transporter domain. 42–49 (GSSGSGKS) contributes to the ATP binding site.

Belongs to the ABC transporter superfamily. Lipoprotein translocase (TC 3.A.1.125) family. The complex is composed of two ATP-binding proteins (LolD) and two transmembrane proteins (LolC and LolE).

Its subcellular location is the cell inner membrane. Its function is as follows. Part of the ABC transporter complex LolCDE involved in the translocation of mature outer membrane-directed lipoproteins, from the inner membrane to the periplasmic chaperone, LolA. Responsible for the formation of the LolA-lipoprotein complex in an ATP-dependent manner. This is Lipoprotein-releasing system ATP-binding protein LolD from Rickettsia felis (strain ATCC VR-1525 / URRWXCal2) (Rickettsia azadi).